Consider the following 518-residue polypeptide: UNC5C-like protein (518 aa).

At 1–10 the chain is on the extracellular side; that stretch reads MSPQESSVQP. Residues 11–31 form a helical; Signal-anchor for type III membrane protein membrane-spanning segment; it reads SQFLLLVGIPVASALLLAQCL. Residues 32–518 lie on the Cytoplasmic side of the membrane; the sequence is RWHCCQWLPG…NHGLELDEKL (487 aa). The ZU5 domain maps to 102 to 237; the sequence is VFSAREVDHR…FSLYTCVLEA (136 aa). The interaction with RELA and NFKB1 stretch occupies residues 186–400; the sequence is QQPSQACAYS…ETWAVPPPVS (215 aa). Positions 208 to 235 are peptidase S68; the sequence is PLGQPGTHISRDECRILLSHFSLYTCVL. Residues His-227 and Ser-229 contribute to the active site. The Death domain occupies 415-494; it reads QLQMLLEPNS…SAIQNYLNRS (80 aa).

This sequence belongs to the unc-5 family. As to quaternary structure, interacts with p65/RELA and NFKB1.

The protein localises to the membrane. It localises to the cytoplasm. Its function is as follows. Inhibits NF-kappa-B-dependent transcription by impairing NF-kappa-B binding to its targets. This is UNC5C-like protein (Unc5cl) from Mus musculus (Mouse).